Reading from the N-terminus, the 326-residue chain is MHRTTRIKITELNPHLMCVLCGGYFIDATTIIECLHSFCKTCIVRYLETSKYCPICDVQVHKTRPLLNIRADKTLQDIVYKLVPGLFKGEMKRRRDFYAAHPSADVANGSNEDRGEVADEDKRIITDDEIISLSIEFFDQNKADRKGSKDKDKEKSKDEINDKRYLRCPAALTIMHLRKFLRSKMDIPSNFQIDVMYEEEALKDYYTLMDIAYIYTWRRNGPLPLKYRVRPTCKRVKINPHTDRINHTSGDMESDSGSDKAGSLGVVIPSTSSCIPSPPVQSPHPHFPHISSTINGTSSSSSSHQNPFTNRARKISLNGVSAISSG.

The RING-type zinc finger occupies 18-57 (CVLCGGYFIDATTIIECLHSFCKTCIVRYLETSKYCPICD). The Nuclear localization signal signature appears at 81–95 (KLVPGLFKGEMKRRR). 2 disordered regions span residues 239-262 (NPHT…DKAG) and 274-326 (CIPS…ISSG). The span at 290-303 (ISSTINGTSSSSSS) shows a compositional bias: low complexity.

Component of a PRC1-like complex. Interacts with cbx4.

It is found in the nucleus. Functionally, component of a Polycomb group (PcG) multiprotein PRC1-like complex, a complex class required to maintain the transcriptionally repressive state of many genes, including Hox genes, throughout development. PcG PRC1 complex acts via chromatin remodeling and modification of histones; it mediates monoubiquitination of histone H2A 'Lys-119', rendering chromatin heritably changed in its expressibility. In the PRC1 complex, it is required to stimulate the E3 ubiquitin-protein ligase activity of rnf2. This chain is Polycomb complex protein BMI-1-A (bmi1a), found in Xenopus laevis (African clawed frog).